The sequence spans 142 residues: Large ribosomal subunit protein uL11 (142 aa).

This sequence belongs to the universal ribosomal protein uL11 family. In terms of assembly, part of the ribosomal stalk of the 50S ribosomal subunit. Interacts with L10 and the large rRNA to form the base of the stalk. L10 forms an elongated spine to which L12 dimers bind in a sequential fashion forming a multimeric L10(L12)X complex. One or more lysine residues are methylated.

In terms of biological role, forms part of the ribosomal stalk which helps the ribosome interact with GTP-bound translation factors. The sequence is that of Large ribosomal subunit protein uL11 from Baumannia cicadellinicola subsp. Homalodisca coagulata.